The chain runs to 377 residues: Succinyl-diaminopimelate desuccinylase (377 aa).

H67 lines the Zn(2+) pocket. The active site involves D69. Position 100 (D100) interacts with Zn(2+). E134 functions as the Proton acceptor in the catalytic mechanism. Zn(2+) contacts are provided by E135, E163, and H349.

It belongs to the peptidase M20A family. DapE subfamily. Homodimer. Requires Zn(2+) as cofactor. Co(2+) serves as cofactor.

It carries out the reaction N-succinyl-(2S,6S)-2,6-diaminopimelate + H2O = (2S,6S)-2,6-diaminopimelate + succinate. Its pathway is amino-acid biosynthesis; L-lysine biosynthesis via DAP pathway; LL-2,6-diaminopimelate from (S)-tetrahydrodipicolinate (succinylase route): step 3/3. In terms of biological role, catalyzes the hydrolysis of N-succinyl-L,L-diaminopimelic acid (SDAP), forming succinate and LL-2,6-diaminopimelate (DAP), an intermediate involved in the bacterial biosynthesis of lysine and meso-diaminopimelic acid, an essential component of bacterial cell walls. The protein is Succinyl-diaminopimelate desuccinylase of Haemophilus influenzae (strain 86-028NP).